The chain runs to 55 residues: Small ribosomal subunit protein uS14 (55 aa).

Positions 20, 23, 38, and 41 each coordinate Zn(2+).

It belongs to the universal ribosomal protein uS14 family. Requires Zn(2+) as cofactor.

This is Small ribosomal subunit protein uS14 (rps29) from Dictyostelium discoideum (Social amoeba).